The chain runs to 488 residues: Rhamnulokinase (488 aa).

11–15 (ASSGR) contributes to the ATP binding site. Residues Ala79 and 234–236 (HDT) contribute to the substrate site. The active-site Proton acceptor is the Asp235. Residue Thr257 coordinates ATP. Position 294 (Asn294) interacts with substrate. 2 residues coordinate ATP: Gln302 and Gly401.

It belongs to the rhamnulokinase family. Mg(2+) serves as cofactor.

The enzyme catalyses L-rhamnulose + ATP = L-rhamnulose 1-phosphate + ADP + H(+). It functions in the pathway carbohydrate degradation; L-rhamnose degradation; glycerone phosphate from L-rhamnose: step 2/3. Its function is as follows. Involved in the catabolism of L-rhamnose (6-deoxy-L-mannose). Catalyzes the transfer of the gamma-phosphate group from ATP to the 1-hydroxyl group of L-rhamnulose to yield L-rhamnulose 1-phosphate. In Lactiplantibacillus plantarum (strain ATCC BAA-793 / NCIMB 8826 / WCFS1) (Lactobacillus plantarum), this protein is Rhamnulokinase.